A 310-amino-acid chain; its full sequence is S-adenosylmethionine-dependent nucleotide dehydratase (310 aa).

Positions 3–221 (PAIPPTINLH…VERHRKVESS (219 aa)) constitute a Radical SAM core domain. [4Fe-4S] cluster is bound by residues Cys-17, Cys-21, and Cys-24.

This sequence belongs to the radical SAM superfamily. Viperin family. It depends on [4Fe-4S] cluster as a cofactor.

It catalyses the reaction GTP + AH2 + S-adenosyl-L-methionine = 3'-deoxy-3',4'-didehydro-GTP + 5'-deoxyadenosine + L-methionine + A + H2O + H(+). Functionally, expression of pVip15 in E.coli (strain MG1655) confers resistance to phage T7; prevents culture collapse upon infection. Catalyzes the conversion of guanosine triphosphate (GTP) to 3'-deoxy-3',4'-didehydro-GTP (ddhGTP), probably via a SAM-dependent radical mechanism. The modified nucleotide represses transcription from T7 RNA polymerase-directed genes (possibly by acting as chain terminators), strongly suggesting these nucleotides block viral polymerase transcription. This Coraliomargarita akajimensis (strain DSM 45221 / IAM 15411 / JCM 23193 / KCTC 12865 / 04OKA010-24) protein is S-adenosylmethionine-dependent nucleotide dehydratase.